Here is a 260-residue protein sequence, read N- to C-terminus: Global transcriptional regulator CodY (260 aa).

Positions 1 to 159 (MPNLLEKTRK…SSTVVGIQLL (159 aa)) are GAF domain. A DNA-binding region (H-T-H motif) is located at residues 207-226 (ASVIADRIGITRSVIVNALR).

The protein belongs to the CodY family.

It localises to the cytoplasm. Functionally, DNA-binding global transcriptional regulator which is involved in the adaptive response to starvation and acts by directly or indirectly controlling the expression of numerous genes in response to nutrient availability. During rapid exponential growth, CodY is highly active and represses genes whose products allow adaptation to nutrient depletion. In Streptococcus equi subsp. equi (strain 4047), this protein is Global transcriptional regulator CodY.